Reading from the N-terminus, the 306-residue chain is Methionyl-tRNA formyltransferase (306 aa).

110 to 113 (SLLP) serves as a coordination point for (6S)-5,6,7,8-tetrahydrofolate.

Belongs to the Fmt family.

It carries out the reaction L-methionyl-tRNA(fMet) + (6R)-10-formyltetrahydrofolate = N-formyl-L-methionyl-tRNA(fMet) + (6S)-5,6,7,8-tetrahydrofolate + H(+). Its function is as follows. Attaches a formyl group to the free amino group of methionyl-tRNA(fMet). The formyl group appears to play a dual role in the initiator identity of N-formylmethionyl-tRNA by promoting its recognition by IF2 and preventing the misappropriation of this tRNA by the elongation apparatus. This Brucella abortus (strain S19) protein is Methionyl-tRNA formyltransferase.